Consider the following 129-residue polypeptide: Protein FYV12 (129 aa).

N-linked (GlcNAc...) asparagine glycosylation is present at Asn-91. Residues 109–128 (LMTTFLLYVLYVCIYISAFI) traverse the membrane as a helical segment.

Its subcellular location is the membrane. In terms of biological role, involved in K1 killer toxin resistance. This chain is Protein FYV12 (FYV12), found in Saccharomyces cerevisiae (strain ATCC 204508 / S288c) (Baker's yeast).